Here is a 273-residue protein sequence, read N- to C-terminus: Programmed cell death 1 ligand 2 (273 aa).

An N-terminal signal peptide occupies residues 1-19 (MIFLLLMLSLELQLHQIAA). At 20-220 (LFTVTVPKEL…SQMEPRTHPT (201 aa)) the chain is on the extracellular side. Residues 21 to 118 (FTVTVPKELY…AWDYKYLTLK (98 aa)) enclose the Ig-like V-type domain. 5 N-linked (GlcNAc...) asparagine glycosylation sites follow: Asn-37, Asn-64, Asn-157, Asn-163, and Asn-189. Disulfide bonds link Cys-42-Cys-102 and Cys-143-Cys-192. Positions 122 to 203 (SYRKINTHIL…FWNTHVRELT (82 aa)) constitute an Ig-like C2-type domain. Residues 221–241 (WLLHIFIPFCIIAFIFIATVI) traverse the membrane as a helical segment. Residues 242–273 (ALRKQLCQKLYSSKDTTKRPVTTTKREVNSAI) are Cytoplasmic-facing.

Belongs to the immunoglobulin superfamily. BTN/MOG family. As to quaternary structure, interacts with PDCD1. In terms of tissue distribution, highly expressed in heart, placenta, pancreas, lung and liver and weakly expressed in spleen, lymph nodes and thymus.

Its subcellular location is the secreted. It is found in the endomembrane system. The protein localises to the cell membrane. In terms of biological role, involved in the costimulatory signal, essential for T-cell proliferation and IFNG production in a PDCD1-independent manner. Interaction with PDCD1 inhibits T-cell proliferation by blocking cell cycle progression and cytokine production. The protein is Programmed cell death 1 ligand 2 (PDCD1LG2) of Homo sapiens (Human).